Reading from the N-terminus, the 455-residue chain is DENN domain-containing protein 11 (455 aa).

Residue V2 is modified to N-acetylvaline. The 173-residue stretch at 15–187 (EGPAVSVPQD…QLEMPGHYSH (173 aa)) folds into the uDENN domain. Residues 21-61 (VPQDPALQAGGWVRGGSGGGRVAAEAPRRREPEEPAPPEVL) form a disordered region. Positions 32-41 (WVRGGSGGGR) are enriched in gly residues. R41 is subject to Omega-N-methylarginine. Positions 214–362 (WLPSIHRYMY…LNSADREKYR (149 aa)) constitute a cDENN domain. Positions 364 to 455 (LNEQRQMLLY…MLVIDNPCCP (92 aa)) constitute a dDENN domain.

Belongs to the DENND11 family. As to expression, expressed within the somatodendritic compartment of neurons, is also present on dendritic growth cones, but is not found in astrocytes.

Its function is as follows. Probable guanine nucleotide exchange factor (GEF). May promote the exchange of GDP to GTP, converting inactive GDP-bound small GTPases into their active GTP-bound form. May play a role in neuritogenesis, as well as in neuronal recovery and/or restructuring in the hippocampus following transient cerebral ischemia. This Rattus norvegicus (Rat) protein is DENN domain-containing protein 11 (Dennd11).